Reading from the N-terminus, the 501-residue chain is Aldehyde dehydrogenase 1A1 (501 aa).

Ser2 carries the N-acetylserine modification. Lys91 and Lys128 each carry N6-acetyllysine. NAD(+) is bound by residues 167–170 (IPWN), 193–196 (KPAE), 226–227 (GP), and 246–247 (GS). Lys252 bears the N6-acetyllysine mark. The Proton acceptor role is filled by Glu269. 269–271 (ELG) provides a ligand contact to NAD(+). Cys303 functions as the Nucleophile in the catalytic mechanism. The interval 336–501 (LTPGVTQGPQ…VTVKISQKNS (166 aa)) is mediates interaction with PRMT3. Position 337 is a phosphothreonine (Thr337). Residue 349 to 353 (EQYDK) participates in NAD(+) binding. N6-acetyllysine is present on residues Lys353 and Lys367. 400 to 402 (EIF) contacts NAD(+). Position 410 is an N6-acetyllysine (Lys410). Residue Ser413 is modified to Phosphoserine. An N6-acetyllysine mark is found at Lys419, Lys435, and Lys495.

The protein belongs to the aldehyde dehydrogenase family. As to quaternary structure, homotetramer. Interacts with PRMT3; the interaction is direct, inhibits ALDH1A1 aldehyde dehydrogenase activity and is independent of the methyltransferase activity of PRMT3. In terms of processing, the N-terminus is blocked most probably by acetylation. Expressed by erythrocytes (at protein level).

The protein resides in the cytoplasm. It localises to the cytosol. Its subcellular location is the cell projection. The protein localises to the axon. It catalyses the reaction an aldehyde + NAD(+) + H2O = a carboxylate + NADH + 2 H(+). It carries out the reaction all-trans-retinal + NAD(+) + H2O = all-trans-retinoate + NADH + 2 H(+). The catalysed reaction is 9-cis-retinal + NAD(+) + H2O = 9-cis-retinoate + NADH + 2 H(+). The enzyme catalyses 11-cis-retinal + NAD(+) + H2O = 11-cis-retinoate + NADH + 2 H(+). It catalyses the reaction 13-cis-retinal + NAD(+) + H2O = 13-cis-retinoate + NADH + 2 H(+). It carries out the reaction 3-deoxyglucosone + NAD(+) + H2O = 2-dehydro-3-deoxy-D-gluconate + NADH + 2 H(+). The catalysed reaction is (E)-4-hydroxynon-2-enal + NAD(+) + H2O = (E)-4-hydroxynon-2-enoate + NADH + 2 H(+). The enzyme catalyses malonaldehyde + NAD(+) + H2O = 3-oxopropanoate + NADH + 2 H(+). It catalyses the reaction hexanal + NAD(+) + H2O = hexanoate + NADH + 2 H(+). It carries out the reaction propanal + NAD(+) + H2O = propanoate + NADH + 2 H(+). The catalysed reaction is acetaldehyde + NAD(+) + H2O = acetate + NADH + 2 H(+). The enzyme catalyses benzaldehyde + NAD(+) + H2O = benzoate + NADH + 2 H(+). It catalyses the reaction 4-aminobutanal + NAD(+) + H2O = 4-aminobutanoate + NADH + 2 H(+). Its pathway is cofactor metabolism; retinol metabolism. Its activity is regulated as follows. Inhibited by citral, disulfiram, and cyanamide. Activated by diethylstilbestrol. Inhibited by duocarmycin analogs. In terms of biological role, cytosolic dehydrogenase that catalyzes the irreversible oxidation of a wide range of aldehydes to their corresponding carboxylic acid. Functions downstream of retinol dehydrogenases and catalyzes the oxidation of retinaldehyde into retinoic acid, the second step in the oxidation of retinol/vitamin A into retinoic acid. This pathway is crucial to control the levels of retinol and retinoic acid, two important molecules which excess can be teratogenic and cytotoxic. Also oxidizes aldehydes resulting from lipid peroxidation like (E)-4-hydroxynon-2-enal/HNE, malonaldehyde and hexanal that form protein adducts and are highly cytotoxic. By participating for instance to the clearance of (E)-4-hydroxynon-2-enal/HNE in the lens epithelium prevents the formation of HNE-protein adducts and lens opacification. Also functions downstream of fructosamine-3-kinase in the fructosamine degradation pathway by catalyzing the oxidation of 3-deoxyglucosone, the carbohydrate product of fructosamine 3-phosphate decomposition, which is itself a potent glycating agent that may react with lysine and arginine side-chains of proteins. Also has an aminobutyraldehyde dehydrogenase activity and is probably part of an alternative pathway for the biosynthesis of GABA/4-aminobutanoate in midbrain, thereby playing a role in GABAergic synaptic transmission. The sequence is that of Aldehyde dehydrogenase 1A1 from Homo sapiens (Human).